The sequence spans 903 residues: E3 ubiquitin-protein ligase DDB_G0292642 (903 aa).

5 disordered regions span residues 115-137 (FTLP…SSSD), 167-236 (LLKR…VIGS), 284-366 (VNKT…NNLK), 415-487 (TPSL…TTEI), and 549-576 (DDSE…GSEG). 2 stretches are compositionally biased toward low complexity: residues 120-130 (TTNNNNNNTTN) and 178-216 (TTTT…TIDT). The segment covering 217–232 (SSEDDDESISSSDDDI) has biased composition (acidic residues). Composition is skewed to low complexity over residues 287 to 301 (TSTT…TTTT) and 311 to 323 (NRNN…NNNN). Residues 313–352 (NNNNNNNNNNNKRFEIESEEESETDISSEEEENNNNNNNN) adopt a coiled-coil conformation. A compositionally biased stretch (acidic residues) spans 329–345 (ESEEESETDISSEEEEN). A compositionally biased stretch (low complexity) spans 346-364 (NNNNNNNSNNNNNSNNNNN). Residues 415-427 (TPSLRLSSAHLPN) show a composition bias toward polar residues. Low complexity predominate over residues 428–443 (TTTTTTTTTTTTTTTT). Acidic residues-rich tracts occupy residues 451–466 (NDDD…DSEI) and 549–568 (DDSE…ESDS). A coiled-coil region spans residues 542–569 (AELVFEYDDSEEEEEEEEEEEGEESDSE). The segment at 612–832 (EPVECKICYM…NEYPECFDRQ (221 aa)) is TRIAD supradomain. Cysteine 616, cysteine 619, cysteine 634, histidine 636, cysteine 639, cysteine 642, cysteine 661, cysteine 666, cysteine 704, cysteine 709, cysteine 725, cysteine 728, cysteine 733, cysteine 736, histidine 741, cysteine 746, cysteine 782, and cysteine 785 together coordinate Zn(2+). The RING-type 1 zinc-finger motif lies at 616 to 666 (CKICYMEYDQSNEVFTLECDHVYCFDCITEHLRILITEGRVLDISCPHPQC). The IBR-type zinc finger occupies 683-746 (NWLKYQKFSM…GEYSHEGAKC (64 aa)). The segment at 782-811 (CPTCKSHIEKHDGCNHMTCINCQHQFCWLC) adopts an RING-type 2; atypical zinc-finger fold. Residue cysteine 795 is part of the active site. Cysteine 800, cysteine 803, cysteine 808, cysteine 811, histidine 819, and cysteine 828 together coordinate Zn(2+). Residues 864–884 (TAAFTVGAPLLLIGGAVLLCV) traverse the membrane as a helical segment.

The protein belongs to the RBR family. RNF14 subfamily.

It localises to the membrane. The enzyme catalyses [E2 ubiquitin-conjugating enzyme]-S-ubiquitinyl-L-cysteine + [acceptor protein]-L-lysine = [E2 ubiquitin-conjugating enzyme]-L-cysteine + [acceptor protein]-N(6)-ubiquitinyl-L-lysine.. Its pathway is protein modification; protein ubiquitination. Its function is as follows. E3 ubiquitin-protein ligase. The polypeptide is E3 ubiquitin-protein ligase DDB_G0292642 (Dictyostelium discoideum (Social amoeba)).